The chain runs to 366 residues: Chorismate synthase (366 aa).

Arg48 contacts NADP(+). FMN is bound by residues Arg125–Ser127, Asn238–Ala239, Gly278, Lys293–Ser297, and Arg319.

The protein belongs to the chorismate synthase family. As to quaternary structure, homotetramer. It depends on FMNH2 as a cofactor.

The enzyme catalyses 5-O-(1-carboxyvinyl)-3-phosphoshikimate = chorismate + phosphate. It functions in the pathway metabolic intermediate biosynthesis; chorismate biosynthesis; chorismate from D-erythrose 4-phosphate and phosphoenolpyruvate: step 7/7. Catalyzes the anti-1,4-elimination of the C-3 phosphate and the C-6 proR hydrogen from 5-enolpyruvylshikimate-3-phosphate (EPSP) to yield chorismate, which is the branch point compound that serves as the starting substrate for the three terminal pathways of aromatic amino acid biosynthesis. This reaction introduces a second double bond into the aromatic ring system. The chain is Chorismate synthase from Alkalilimnicola ehrlichii (strain ATCC BAA-1101 / DSM 17681 / MLHE-1).